Consider the following 48-residue polypeptide: Sperm protamine R3 isoform 1 (48 aa).

Basic residues predominate over residues 1 to 29 (ARRRHSMKKKRKSVRRRKTRKNQRKRKNS). Positions 1–48 (ARRRHSMKKKRKSVRRRKTRKNQRKRKNSLGRSFKQHGFLKQPPRFRP) are disordered.

In terms of tissue distribution, testis.

It localises to the nucleus. The protein localises to the chromosome. Protamines substitute for histones in the chromatin of sperm during the haploid phase of spermatogenesis. They compact sperm DNA into a highly condensed, stable and inactive complex. The chain is Sperm protamine R3 isoform 1 from Hydrolagus colliei (Spotted ratfish).